The chain runs to 1192 residues: DNA topoisomerase 2 (1192 aa).

ATP contacts are provided by residues asparagine 64, asparagine 95, and 142 to 149 (GTNGVGLK). The Mg(2+) site is built by glutamate 438, aspartate 539, and aspartate 541. Residues 707 to 1174 (IPNFLDGMTR…PGASVWLEEI (468 aa)) form the Topo IIA-type catalytic domain. Residue tyrosine 800 is the O-(5'-phospho-DNA)-tyrosine intermediate of the active site.

This sequence belongs to the type II topoisomerase family. The cofactor is Mg(2+). Mn(2+) is required as a cofactor. Requires Ca(2+) as cofactor.

The protein resides in the host cytoplasm. It carries out the reaction ATP-dependent breakage, passage and rejoining of double-stranded DNA.. Its function is as follows. Type II topoisomerase. Processively relaxes supercoiled DNA. Displays DNA-supercoiling activity only when associated with the viral histone-like protein. The chain is DNA topoisomerase 2 (TOP) from African swine fever virus (strain Badajoz 1971 Vero-adapted) (Ba71V).